The following is a 95-amino-acid chain: Opiscorpine-3 (95 aa).

Residues 1–19 form the signal peptide; sequence MNNKLTALIFLGLLAIASC. The BetaSPN-type CS-alpha/beta domain maps to 55–95; it reads EFMCVANVDMTKSCDTHCQKASGEKGYCHGTKCKCGVPLSY. Disulfide bonds link cysteine 58–cysteine 82, cysteine 68–cysteine 87, and cysteine 72–cysteine 89.

This sequence belongs to the long chain scorpion toxin family. Class 3 subfamily. As to expression, expressed by the venom gland.

It localises to the secreted. In terms of biological role, has antimicrobial activity against yeasts and bacteria. The polypeptide is Opiscorpine-3 (Opistophthalmus carinatus (African yellow leg scorpion)).